The chain runs to 312 residues: 4-diphosphocytidyl-2-C-methyl-D-erythritol kinase (312 aa).

Lysine 16 is a catalytic residue. 101 to 111 provides a ligand contact to ATP; it reads PIGAGLAGGSS. The active site involves aspartate 143.

Belongs to the GHMP kinase family. IspE subfamily.

It catalyses the reaction 4-CDP-2-C-methyl-D-erythritol + ATP = 4-CDP-2-C-methyl-D-erythritol 2-phosphate + ADP + H(+). It participates in isoprenoid biosynthesis; isopentenyl diphosphate biosynthesis via DXP pathway; isopentenyl diphosphate from 1-deoxy-D-xylulose 5-phosphate: step 3/6. Its function is as follows. Catalyzes the phosphorylation of the position 2 hydroxy group of 4-diphosphocytidyl-2C-methyl-D-erythritol. This is 4-diphosphocytidyl-2-C-methyl-D-erythritol kinase from Prochlorococcus marinus subsp. pastoris (strain CCMP1986 / NIES-2087 / MED4).